The primary structure comprises 978 residues: Monofunctional C1-tetrahydrofolate synthase, mitochondrial (978 aa).

Residues 1–10 (MGTRLPLVLR) are compositionally biased toward low complexity. A mitochondrion-targeting transit peptide spans 1 to 31 (MGTRLPLVLRQLRRPPQPPGPPRRLRVPCRA). A disordered region spans residues 1–71 (MGTRLPLVLR…SPGGRTPAAR (71 aa)). Residues 31–348 (ASSGGGGGGG…REQQHRRWRL (318 aa)) form a methylenetetrahydrofolate dehydrogenase and cyclohydrolase region. Over residues 33–45 (SGGGGGGGGGREG) the composition is skewed to gly residues. At Lys189 the chain carries N6-acetyllysine; alternate. The residue at position 189 (Lys189) is an N6-succinyllysine; alternate. A formyltetrahydrofolate synthetase region spans residues 349–978 (HCLKLQPLSP…TETEQVKGLF (630 aa)). A Phosphoserine modification is found at Ser357. 423-430 (TPLGEGKS) serves as a coordination point for ATP. Lys596 carries the N6-succinyllysine modification.

In the N-terminal section; belongs to the tetrahydrofolate dehydrogenase/cyclohydrolase family. This sequence in the C-terminal section; belongs to the formate--tetrahydrofolate ligase family. In terms of assembly, homodimer. In terms of tissue distribution, detected in most tissues, highest expression found in placenta, thymus and brain. Low expression is found in liver and skeletal muscle. Up-regulated in colon adenocarcinoma.

It is found in the mitochondrion. It carries out the reaction (6S)-5,6,7,8-tetrahydrofolate + formate + ATP = (6R)-10-formyltetrahydrofolate + ADP + phosphate. The protein operates within one-carbon metabolism; tetrahydrofolate interconversion. Its function is as follows. May provide the missing metabolic reaction required to link the mitochondria and the cytoplasm in the mammalian model of one-carbon folate metabolism complementing thus the enzymatic activities of MTHFD2. The chain is Monofunctional C1-tetrahydrofolate synthase, mitochondrial from Homo sapiens (Human).